Here is a 557-residue protein sequence, read N- to C-terminus: Urocanate hydratase (557 aa).

NAD(+)-binding positions include 48–49 (GG), glutamine 126, 178–180 (GMG), aspartate 198, arginine 203, 244–245 (NA), 265–269 (QTSAH), 274–275 (YL), and tyrosine 323. The active site involves cysteine 411. Position 493 (glycine 493) interacts with NAD(+).

This sequence belongs to the urocanase family. NAD(+) serves as cofactor.

The protein localises to the cytoplasm. The enzyme catalyses 4-imidazolone-5-propanoate = trans-urocanate + H2O. It participates in amino-acid degradation; L-histidine degradation into L-glutamate; N-formimidoyl-L-glutamate from L-histidine: step 2/3. Catalyzes the conversion of urocanate to 4-imidazolone-5-propionate. The protein is Urocanate hydratase of Beutenbergia cavernae (strain ATCC BAA-8 / DSM 12333 / CCUG 43141 / JCM 11478 / NBRC 16432 / NCIMB 13614 / HKI 0122).